We begin with the raw amino-acid sequence, 870 residues long: Leucine--tRNA ligase (870 aa).

The short motif at 55 to 65 (PYPSGTLHMGH) is the 'HIGH' region element. Positions 626-630 (KMSKS) match the 'KMSKS' region motif. Lysine 629 contacts ATP.

The protein belongs to the class-I aminoacyl-tRNA synthetase family.

It is found in the cytoplasm. The catalysed reaction is tRNA(Leu) + L-leucine + ATP = L-leucyl-tRNA(Leu) + AMP + diphosphate. The sequence is that of Leucine--tRNA ligase from Prochlorococcus marinus (strain SARG / CCMP1375 / SS120).